Here is a 179-residue protein sequence, read N- to C-terminus: Large ribosomal subunit protein uL5 (179 aa).

It belongs to the universal ribosomal protein uL5 family. Part of the 50S ribosomal subunit; part of the 5S rRNA/L5/L18/L25 subcomplex. Contacts the 5S rRNA and the P site tRNA. Forms a bridge to the 30S subunit in the 70S ribosome.

This is one of the proteins that bind and probably mediate the attachment of the 5S RNA into the large ribosomal subunit, where it forms part of the central protuberance. In the 70S ribosome it contacts protein S13 of the 30S subunit (bridge B1b), connecting the 2 subunits; this bridge is implicated in subunit movement. Contacts the P site tRNA; the 5S rRNA and some of its associated proteins might help stabilize positioning of ribosome-bound tRNAs. This Salmonella arizonae (strain ATCC BAA-731 / CDC346-86 / RSK2980) protein is Large ribosomal subunit protein uL5.